A 418-amino-acid chain; its full sequence is MRVWVPVGVLTSLAYCFHQRRVALAEQRAPNGQRPVDRNLLELKMVQVVFRHGARSPLKPLPLEEQVEWNPKLLEIPPQTRFDYTVTNLAGGPKPHSHYDTEYRKTTLRGGVLAGQLTKVGMQQMFALGEKLRKNYVEDIPFLSPVYNPQEVFIRSTNMFRNLESTRCLLAGLFQHQKGSAVIHTDEASSEVLYPNYQSCWVLKEKTRGRKKAAISQPGISEDLEKVKTGVGINNGDDVDFFVLLDNVAAEQVHSLLNCPALERFAQLIEQRAVDMALYVVEQEDRESIQMAVGPFLHILEGNLLKTVDPTTAPSKTRKMYLYATHDVTLLPMLLALGIFDQKWPPFAVDLTMELYQHQESKEWFVQLFYNGKEQVPRGCPDKLCPLDKFLNTMSVYSVSPEKYRTLCSKTRIVELGE.

The N-terminal 25 residues, 1-25 (MRVWVPVGVLTSLAYCFHQRRVALA), are a transit peptide targeting the mitochondrion. Residues 51-161 (RHGARSPLKP…VFIRSTNMFR (111 aa)) form a substrate binding region. The active-site Nucleophile is His-52. The active-site Proton donor is Asp-327.

Belongs to the histidine acid phosphatase family. Monomer.

It is found in the mitochondrion. It catalyses the reaction a phosphate monoester + H2O = an alcohol + phosphate. The catalysed reaction is 1-(9Z-octadecenoyl)-sn-glycero-3-phosphate + H2O = 1-(9Z-octadecenoyl)-sn-glycerol + phosphate. In terms of biological role, hydrolyzes lysophosphatidic acid (LPA) containing a medium length fatty acid chain to the corresponding monoacylglycerol. Has highest activity with lysophosphatidic acid containing myristate (C14:0), monounsaturated oleate (C18:1) or palmitate (C16:0), and lower activity with C18:0 and C6:0 lysophosphatidic acid. The chain is Lysophosphatidic acid phosphatase type 6 (Acp6) from Mus musculus (Mouse).